A 115-amino-acid polypeptide reads, in one-letter code: Cyclin-dependent kinase 2-associated protein 1 (115 aa).

Positions 20 to 25 (GSVHSP) are interaction with CDK2AP2. At Ser46 the chain carries Phosphoserine; by IKKE.

This sequence belongs to the CDK2AP family. Homodimer. Component of the nucleosome remodeling and deacetylase (NuRD) repressor complex, composed of core proteins MTA1, MTA2, MTA3, RBBP4, RBBP7, HDAC1, HDAC2, MBD2, MBD3, and peripherally associated proteins CDK2AP1, CDK2AP2, GATAD2A, GATAD2B, CHD3, CHD4 and CHD5. The exact stoichiometry of the NuRD complex is unknown, and some subunits such as MBD2 and MBD3, GATAD2A and GATAD2B, and CHD3, CHD4 and CHD5 define mutually exclusive NuRD complexes. Interacts with monomeric unphosphorylated CDK2. Interacts with CDK2AP2. Interacts with GATAD2A. Interacts with HDAC1. Interacts with HDAC2. Interacts with MBD2. Interacts with MBD3. Interacts with RBBP4. Interacts with RBBP7. Phosphorylated in vitro by IKBKE at Ser-46.

The protein resides in the nucleus. It is found in the chromosome. Functionally, inhibitor of cyclin-dependent kinase CDK2. Also acts as a component of the histone deacetylase NuRD complex which participates in the remodeling of chromatin. The chain is Cyclin-dependent kinase 2-associated protein 1 (CDK2AP1) from Homo sapiens (Human).